A 298-amino-acid polypeptide reads, in one-letter code: ER-bound oxygenase mpaB (298 aa).

Over M1–M24 the chain is Lumenal. A helical transmembrane segment spans residues P25–L45. Over R46–E298 the chain is Cytoplasmic.

The protein belongs to the mpaB oxygenase family.

It is found in the endoplasmic reticulum membrane. The enzyme catalyses 4-farnesyl-3,5-dihydroxy-6-methylphthalide + AH2 + 2 O2 = (4E,8E)-10-(4,6-dihydroxy-7-methyl-3-oxo-1,3-dihydro-2-benzofuran-5-yl)-4,8-dimethyldeca-4,8-dienoate + acetone + A + H2O + H(+). Its pathway is secondary metabolite biosynthesis; terpenoid biosynthesis. ER-bound oxygenase; part of the gene cluster that mediates the biosynthesis of mycophenolic acid (MPA), the first isolated antibiotic natural product in the world obtained from a culture of Penicillium brevicompactum in 1893. MpaB catalyzes the oxidative cleavage the C19-C20 double bond in farnesyl-DHMP (FDHMP) to yield FDHMP-3C via a mycophenolic aldehyde intermediate. The first step of the pathway is the synthesis of 5-methylorsellinic acid (5MOA) by the cytosolic polyketide synthase mpaC. 5MOA is then converted to the phthalide compound 5,7-dihydroxy-4,6-dimethylphthalide (DHMP) by the endoplasmic reticulum-bound cytochrome P450 monooxygenase mpaDE. MpaDE first catalyzes hydroxylation of 5-MOA to 4,6-dihydroxy-2-(hydroxymethyl)-3-methylbenzoic acid (DHMB). MpaDE then acts as a lactone synthase that catalyzes the ring closure to convert DHMB into DHMP. The next step is the prenylation of DHMP by the Golgi apparatus-associated prenyltransferase mpaA to yield farnesyl-DHMP (FDHMP). The ER-bound oxygenase mpaB then mediates the oxidative cleavage the C19-C20 double bond in FDHMP to yield FDHMP-3C via a mycophenolic aldehyde intermediate. The O-methyltransferase mpaG catalyzes the methylation of FDHMP-3C to yield MFDHMP-3C. After the cytosolic methylation of FDHMP-3C, MFDHMP-3C enters into peroxisomes probably via free diffusion due to its low molecular weight. Upon a peroxisomal CoA ligation reaction, catalyzed by a beta-oxidation component enzyme acyl-CoA ligase ACL891, MFDHMP-3C-CoA would then be restricted to peroxisomes for the following beta-oxidation pathway steps. The peroxisomal beta-oxidation machinery than converts MFDHMP-3C-CoA into MPA_CoA, via a beta-oxidation chain-shortening process. Finally mpaH acts as a peroxisomal acyl-CoA hydrolase with high substrate specificity toward MPA-CoA to release the final product MPA. The polypeptide is ER-bound oxygenase mpaB (Penicillium roqueforti (strain FM164)).